We begin with the raw amino-acid sequence, 315 residues long: Methionyl-tRNA formyltransferase (315 aa).

117–120 (SLLP) contributes to the (6S)-5,6,7,8-tetrahydrofolate binding site.

It belongs to the Fmt family.

The catalysed reaction is L-methionyl-tRNA(fMet) + (6R)-10-formyltetrahydrofolate = N-formyl-L-methionyl-tRNA(fMet) + (6S)-5,6,7,8-tetrahydrofolate + H(+). Attaches a formyl group to the free amino group of methionyl-tRNA(fMet). The formyl group appears to play a dual role in the initiator identity of N-formylmethionyl-tRNA by promoting its recognition by IF2 and preventing the misappropriation of this tRNA by the elongation apparatus. The polypeptide is Methionyl-tRNA formyltransferase (Methylibium petroleiphilum (strain ATCC BAA-1232 / LMG 22953 / PM1)).